The following is a 386-amino-acid chain: F420 non-reducing hydrogenase I small subunit (386 aa).

The tat-type signal signal peptide spans 1 to 51 (MVEMSTGTTNLVRTLDSMDFLKMDRRTFMKAVSALGATAFLGTYQTEIVNA). Positions 67, 70, 178, 227, 273, 276, 296, and 302 each coordinate [4Fe-4S] cluster. [3Fe-4S] cluster contacts are provided by Cys311, Cys330, and Cys333.

The protein belongs to the [NiFe]/[NiFeSe] hydrogenase small subunit family. In terms of assembly, composed of a large subunit (VhoA), a small subunit (VhoG) and a cytochrome subunit (VhoC). The cofactor is [4Fe-4S] cluster. [3Fe-4S] cluster serves as cofactor. In terms of processing, predicted to be exported by the Tat system. The position of the signal peptide cleavage has not been experimentally proven.

The protein resides in the cell membrane. It carries out the reaction methanophenazine + H2 = dihydromethanophenazine. Part of the F420 non-reducing hydrogenase I complex that catalyzes the reduction of methanophenazine to dihydromethanophenazine. The sequence is that of F420 non-reducing hydrogenase I small subunit from Methanosarcina mazei (strain ATCC BAA-159 / DSM 3647 / Goe1 / Go1 / JCM 11833 / OCM 88) (Methanosarcina frisia).